Consider the following 448-residue polypeptide: Phosphoglucosamine mutase (448 aa).

S108 functions as the Phosphoserine intermediate in the catalytic mechanism. The Mg(2+) site is built by S108, D247, D249, and D251. Residue S108 is modified to Phosphoserine.

It belongs to the phosphohexose mutase family. It depends on Mg(2+) as a cofactor. Post-translationally, activated by phosphorylation.

It carries out the reaction alpha-D-glucosamine 1-phosphate = D-glucosamine 6-phosphate. In terms of biological role, catalyzes the conversion of glucosamine-6-phosphate to glucosamine-1-phosphate. This Herminiimonas arsenicoxydans protein is Phosphoglucosamine mutase.